A 240-amino-acid chain; its full sequence is MIENWHRGFVLHRREYSETSLLVDFFTEEHGRITLLAKGARRPRSPLKAVLQPFTPLLLRWSGKGDLKTLTKAEPASLTLPMQTLALYSGFYVNEVLARVLENQTAYPELFQHYLQCMTRLATQPEQIEPILRTFEFQMLKALGYGVNFSICAATGDPVSPSMTYQFKENEGFIASLLRNNASFLGKDLLAFEQLDFSDKATLQAAKRFTRMALKPYLGSQPLKSRELFQSILPNKLKSG.

Belongs to the RecO family.

Involved in DNA repair and RecF pathway recombination. This Actinobacillus pleuropneumoniae serotype 7 (strain AP76) protein is DNA repair protein RecO.